A 277-amino-acid polypeptide reads, in one-letter code: Phosphoenolpyruvate synthase regulatory protein (277 aa).

157–164 (GVSRCGKT) contributes to the ADP binding site.

The protein belongs to the pyruvate, phosphate/water dikinase regulatory protein family. PSRP subfamily.

The catalysed reaction is [pyruvate, water dikinase] + ADP = [pyruvate, water dikinase]-phosphate + AMP + H(+). The enzyme catalyses [pyruvate, water dikinase]-phosphate + phosphate + H(+) = [pyruvate, water dikinase] + diphosphate. In terms of biological role, bifunctional serine/threonine kinase and phosphorylase involved in the regulation of the phosphoenolpyruvate synthase (PEPS) by catalyzing its phosphorylation/dephosphorylation. The sequence is that of Phosphoenolpyruvate synthase regulatory protein from Escherichia coli O1:K1 / APEC.